A 1273-amino-acid polypeptide reads, in one-letter code: MKRRLDDQESPVYAAQQRRIPGSTEAFPHQHRVLAPAPPVYEAVSETMQSATGIQYSVTPSYQVSAMPQSSGSHGPAIAAVHSSHHHPTAVQPHGGQVVQSHAHPAPPVAPVQGQQQFQRLKVEDALSYLDQVKLQFGSQPQVYNDFLDIMKEFKSQSIDTPGVISRVSQLFKGHPDLIMGFNTFLPPGYKIEVQTNDMVNVTTPGQVHQIPTHGIQPQPQPPPQHPSQPSAQSAPAPAQPAPQPPPAKVSKPSQLQAHTPASQQTPPLPPYASPRSPPVQPHTPVTISLGTAPSLQNNQPVEFNHAINYVNKIKNRFQGQPDIYKAFLEILHTYQKEQRNAKEAGGNYTPALTEQEVYAQVARLFKNQEDLLSEFGQFLPDANSSVLLSKTTAEKVDSVRNDHGGTVKKPQLNNKPQRPSQNGCQIRRHPTGTTPPVKKKPKLLNLKDSSMADASKHGGGTESLFFDKVRKALRSAEAYENFLRCLVIFNQEVISRAELVQLVSPFLGKFPELFNWFKNFLGYKESVHLETYPKERATEGIAMEIDYASCKRLGSSYRALPKSYQQPKCTGRTPLCKEVLNDTWVSFPSWSEDSTFVSSKKTQYEEHIYRCEDERFELDVVLETNLATIRVLEAIQKKLSRLSAEEQAKFRLDNTLGGTSEVIHRKALQRIYADKAADIIDGLRKNPSIAVPIVLKRLKMKEEEWREAQRGFNKVWREQNEKYYLKSLDHQGINFKQNDTKVLRSKSLLNEIESIYDERQEQATEENAGVPVGPHLSLAYEDKQILEDAAALIIHHVKRQTGIQKEDKYKIKQIMHHFIPDLLFAQRGDLSDVEEEEEEEMDVDEATGAVKKHNGVGGSPPKSKLLFSNTAAQKLRGMDEVYNLFYVNNNWYIFMRLHQILCLRLLRICSQAERQIEEENREREWEREVLGIKRDKSDSPAIQLRLKEPMDVDVEDYYPAFLDMVRSLLDGNIDSSQYEDSLREMFTIHAYIAFTMDKLIQSIVRQLQHIVSDEICVQVTDLYLAENNNGATGGQLNTQNSRSLLESTYQRKAEQLMSDENCFKLMFIQSQGQVQLTIELLDTEEENSDDPVEAERWSDYVERYMNSDTTSPELREHLAQKPVFLPRNLRRIRKCQRGREQQEKEGKEGNSKKTMENVDSLDKLECRFKLNSYKMVYVIKSEDYMYRRTALLRAHQSHERVSKRLHQRFQAWVDKWTKEHVPREMAAETSKWLMGEGLEGLVPCTTTCDTETLHFVSINKYRVKYGTVFKAP.

Disordered regions lie at residues 1–23 (MKRRLDDQESPVYAAQQRRIPGS) and 87–110 (HPTAVQPHGGQVVQSHAHPAPPVA). S10 carries the post-translational modification Phosphoserine. In terms of domain architecture, PAH 1 spans 119–189 (QRLKVEDALS…MGFNTFLPPG (71 aa)). The tract at residues 119 to 196 (QRLKVEDALS…PPGYKIEVQT (78 aa)) is interaction with HCFC1. Residues K122 and K134 each participate in a glycyl lysine isopeptide (Lys-Gly) (interchain with G-Cter in SUMO2) cross-link. The disordered stretch occupies residues 205-297 (PGQVHQIPTH…ISLGTAPSLQ (93 aa)). Positions 205-480 (PGQVHQIPTH…RKALRSAEAY (276 aa)) are interaction with REST. Positions 228–237 (SQPSAQSAPA) are enriched in low complexity. A compositionally biased stretch (pro residues) spans 238 to 248 (PAQPAPQPPPA). A compositionally biased stretch (polar residues) spans 252–266 (KPSQLQAHTPASQQT). A compositionally biased stretch (pro residues) spans 267–282 (PPLPPYASPRSPPVQP). The residue at position 277 (S277) is a Phosphoserine. A Phosphothreonine modification is found at T284. Over residues 284 to 297 (TPVTISLGTAPSLQ) the composition is skewed to polar residues. The PAH 2 domain occupies 300 to 383 (QPVEFNHAIN…SEFGQFLPDA (84 aa)). The disordered stretch occupies residues 398–446 (DSVRNDHGGTVKKPQLNNKPQRPSQNGCQIRRHPTGTTPPVKKKPKLLN). Over residues 412 to 425 (QLNNKPQRPSQNGC) the composition is skewed to polar residues. A PAH 3 domain is found at 456-525 (SKHGGGTESL…NWFKNFLGYK (70 aa)). The segment at 458–525 (HGGGTESLFF…NWFKNFLGYK (68 aa)) is interaction with SAP30. Residue K469 is modified to N6-acetyllysine. Residues 523 to 850 (GYKESVHLET…EMDVDEATGA (328 aa)) form an interaction with NCOR1 region. The tract at residues 524-659 (YKESVHLETY…KFRLDNTLGG (136 aa)) is interaction with SUDS3 and SAP130. A Glycyl lysine isopeptide (Lys-Gly) (interchain with G-Cter in SUMO2) cross-link involves residue K563. Residues 687–829 (NPSIAVPIVL…IPDLLFAQRG (143 aa)) form an interaction with HDAC1 and ARID4B region. A phosphoserine mark is found at S832 and S860. An N6-acetyllysine mark is found at K865 and K875. The segment at 888–967 (VNNNWYIFMR…YYPAFLDMVR (80 aa)) is interaction with OGT. Residues 903–932 (CLRLLRICSQAERQIEEENREREWEREVLG) are a coiled coil. Phosphoserine occurs at positions 940, 1089, and 1112. Residues 1136–1156 (CQRGREQQEKEGKEGNSKKTM) form a disordered region. The span at 1138-1156 (RGREQQEKEGKEGNSKKTM) shows a compositional bias: basic and acidic residues.

In terms of assembly, interacts with ARID4B, BRMS1L, HCFC1, HDAC1, HDAC2, MXI1, SAP30L, SAP130, SFPQ and TOPORS. Interacts with OGT (via TPRs 1-6); the interaction mediates transcriptional repression in parallel with histone deacetylase. Interacts with BAZ2A, MXD1, MXD3, MXD4, MBD2, DACH1, NCOR1, NR4A2, REST, RLIM, SAP30, SETDB1, SMYD2, and SUDS3. Interacts with PHF12 in a complex composed of HDAC1, PHF12 and SAP30. Interacts with TET1; the interaction recruits SIN3A to gene promoters. The large PER complex involved in the histone deacetylation is composed of at least HDAC1, PER2, SFPQ and SIN3A. Interacts with KLF11. Interacts with PPHLN1. Found in a complex with YY1, GON4L and HDAC1. Interacts (via PAH2) with FOXK1. Interacts with FOXK2. Found in a complex composed of at least SINHCAF, SIN3A, HDAC1, SAP30, RBBP4, OGT and TET1. Interacts with SINHCAF. Interacts with SPHK2. In terms of processing, SUMO1 sumoylated by TOPORS. Probably desumoylated by SENP2. As to expression, expressed in the developing brain, with highest levels of expression detected in the ventricular zone of various cortical regions.

It is found in the nucleus. The protein localises to the nucleolus. Its function is as follows. Acts as a transcriptional repressor. Corepressor for REST. Interacts with MXI1 to repress MYC responsive genes and antagonize MYC oncogenic activities. Also interacts with MXD1-MAX heterodimers to repress transcription by tethering SIN3A to DNA. Acts cooperatively with OGT to repress transcription in parallel with histone deacetylation. Involved in the control of the circadian rhythms. Required for the transcriptional repression of circadian target genes, such as PER1, mediated by the large PER complex through histone deacetylation. Cooperates with FOXK1 to regulate cell cycle progression probably by repressing cell cycle inhibitor genes expression. Required for cortical neuron differentiation and callosal axon elongation. This chain is Paired amphipathic helix protein Sin3a, found in Homo sapiens (Human).